The primary structure comprises 294 residues: Aquaporin-B (294 aa).

Residues 1-31 are disordered; that stretch reads MSLKRSDDYQDLEEGIAMEDGGNIKDEEEKP. Topologically, residues 1 to 42 are cytoplasmic; it reads MSLKRSDDYQDLEEGIAMEDGGNIKDEEEKPLDPIEEQNKKR. Residues 22 to 31 are compositionally biased toward basic and acidic residues; sequence GNIKDEEEKP. A helical membrane pass occupies residues 43–63; the sequence is WVLIRAVLGELLCTFLFVYVL. The Extracellular segment spans residues 64–79; it reads CATSANFIRLGSPPNP. Ser-75 carries an O-linked (GalNAc...) serine glycan. The helical transmembrane segment at 80-100 threads the bilayer; the sequence is VVGGLSTGFAAVALIYSFADV. Residues 101-123 are Cytoplasmic-facing; the sequence is SGAHFNPAVTFATCVTRKTSITK. Positions 106–108 match the NPA 1 motif; it reads NPA. A helical membrane pass occupies residues 124–144; the sequence is GLMYVGAQLVGSVLASLILLA. Topologically, residues 145 to 172 are extracellular; sequence TFPGNFPGDKNAASAVAIAPSTDANIGN. Residues 173 to 193 traverse the membrane as a helical segment; it reads AFLTELVLTFILVYVIFAVAF. Over 194-224 the chain is Cytoplasmic; the sequence is DTVDNSVKTKVVGKSSSNNLTIYTTSGQTKA. Positions 208–219 are required for water permeability; sequence SSSNNLTIYTTS. The helical transmembrane segment at 225-245 threads the bilayer; sequence GFAPIAIGFTLGFLCFLGGSV. Residues 246–268 lie on the Extracellular side of the membrane; that stretch reads SGGAFNPARVFGTALVGNNWTRH. The NPA 2 signature appears at 251 to 253; sequence NPA. Residues 269–289 form a helical membrane-spanning segment; the sequence is WMYWIADFLGAGLAGFAQKFF. Residues 290 to 294 are Cytoplasmic-facing; that stretch reads SSTHK.

It belongs to the MIP/aquaporin (TC 1.A.8) family. Post-translationally, glycosylated and non-glycosylated forms exist throughout all developmental stages.

It is found in the cell membrane. The protein localises to the cytoplasmic vesicle. In terms of biological role, putatively gated water-specific channel, requiring a cysteine residue within the channel. Impermeable to water, glycerol and urea when expressed in Xenopus oocytes. Not regulated by pH; channels remain impermeable to water at pH 7.4 and 5.2. The polypeptide is Aquaporin-B (Dictyostelium discoideum (Social amoeba)).